We begin with the raw amino-acid sequence, 451 residues long: UDP-N-acetylmuramoylalanine--D-glutamate ligase (451 aa).

118–124 (GSNGKTT) provides a ligand contact to ATP.

It belongs to the MurCDEF family.

Its subcellular location is the cytoplasm. The catalysed reaction is UDP-N-acetyl-alpha-D-muramoyl-L-alanine + D-glutamate + ATP = UDP-N-acetyl-alpha-D-muramoyl-L-alanyl-D-glutamate + ADP + phosphate + H(+). It functions in the pathway cell wall biogenesis; peptidoglycan biosynthesis. Functionally, cell wall formation. Catalyzes the addition of glutamate to the nucleotide precursor UDP-N-acetylmuramoyl-L-alanine (UMA). The polypeptide is UDP-N-acetylmuramoylalanine--D-glutamate ligase (Shouchella clausii (strain KSM-K16) (Alkalihalobacillus clausii)).